The sequence spans 510 residues: Cytochrome P450 705A20 (510 aa).

A helical transmembrane segment spans residues 7-27 (QHCFSFILLCFFSLLCYSLLF).

Belongs to the cytochrome P450 family. Requires heme as cofactor.

The protein resides in the membrane. The protein is Cytochrome P450 705A20 (CYP705A20) of Arabidopsis thaliana (Mouse-ear cress).